The chain runs to 407 residues: Carbamoyl phosphate synthase small chain (407 aa).

Residues Met-1 to Ala-205 are CPSase. Ser-60, Gly-257, and Gly-259 together coordinate L-glutamine. Positions His-209–Gln-397 constitute a Glutamine amidotransferase type-1 domain. Cys-286 serves as the catalytic Nucleophile. L-glutamine is bound by residues Leu-287, Gln-290, Asn-328, Gly-330, and Phe-331. Catalysis depends on residues His-370 and Glu-372.

The protein belongs to the CarA family. In terms of assembly, composed of two chains; the small (or glutamine) chain promotes the hydrolysis of glutamine to ammonia, which is used by the large (or ammonia) chain to synthesize carbamoyl phosphate. Tetramer of heterodimers (alpha,beta)4.

It catalyses the reaction hydrogencarbonate + L-glutamine + 2 ATP + H2O = carbamoyl phosphate + L-glutamate + 2 ADP + phosphate + 2 H(+). The catalysed reaction is L-glutamine + H2O = L-glutamate + NH4(+). The protein operates within amino-acid biosynthesis; L-arginine biosynthesis; carbamoyl phosphate from bicarbonate: step 1/1. It functions in the pathway pyrimidine metabolism; UMP biosynthesis via de novo pathway; (S)-dihydroorotate from bicarbonate: step 1/3. Small subunit of the glutamine-dependent carbamoyl phosphate synthetase (CPSase). CPSase catalyzes the formation of carbamoyl phosphate from the ammonia moiety of glutamine, carbonate, and phosphate donated by ATP, constituting the first step of 2 biosynthetic pathways, one leading to arginine and/or urea and the other to pyrimidine nucleotides. The small subunit (glutamine amidotransferase) binds and cleaves glutamine to supply the large subunit with the substrate ammonia. This Brucella suis (strain ATCC 23445 / NCTC 10510) protein is Carbamoyl phosphate synthase small chain.